The sequence spans 165 residues: Nucleotide-binding protein Suden_0039 (165 aa).

It belongs to the YajQ family.

Nucleotide-binding protein. The polypeptide is Nucleotide-binding protein Suden_0039 (Sulfurimonas denitrificans (strain ATCC 33889 / DSM 1251) (Thiomicrospira denitrificans (strain ATCC 33889 / DSM 1251))).